A 129-amino-acid chain; its full sequence is Glycine cleavage system H protein (129 aa).

The Lipoyl-binding domain occupies Ser-24 to Met-106. Lys-65 carries the N6-lipoyllysine modification.

This sequence belongs to the GcvH family. As to quaternary structure, the glycine cleavage system is composed of four proteins: P, T, L and H. Requires (R)-lipoate as cofactor.

In terms of biological role, the glycine cleavage system catalyzes the degradation of glycine. The H protein shuttles the methylamine group of glycine from the P protein to the T protein. In Shewanella loihica (strain ATCC BAA-1088 / PV-4), this protein is Glycine cleavage system H protein.